Here is a 639-residue protein sequence, read N- to C-terminus: Chaperone protein DnaK (639 aa).

Position 197 is a phosphothreonine; by autocatalysis (Thr197). Composition is skewed to basic and acidic residues over residues 514–529 (AEEN…DLVE) and 540–553 (GTEK…EKVD). Disordered stretches follow at residues 514-554 (AEEN…KVDP) and 603-639 (DKAE…RKRG). The segment covering 612-633 (APEEEERGVDEDIVDADFEDLD) has biased composition (acidic residues).

The protein belongs to the heat shock protein 70 family.

Acts as a chaperone. The polypeptide is Chaperone protein DnaK (Jannaschia sp. (strain CCS1)).